The primary structure comprises 380 residues: Chaperone protein DnaJ (380 aa).

A J domain is found at 4–68 (DFYSVLGVSR…EKRRMYDQMG (65 aa)). Basic and acidic residues predominate over residues 27–87 (KASEYHPDVS…RGATDTDRGR (61 aa)). Residues 27–126 (KASEYHPDVS…SRSGPRQGSD (100 aa)) form a disordered region. Residues 88–100 (GGMGGMGGGGMGG) are compositionally biased toward gly residues. The span at 115–124 (SQSRSGPRQG) shows a compositional bias: low complexity. A CR-type zinc finger spans residues 141–223 (GVTKQLTVTR…CRGDGQVRNE (83 aa)). Zn(2+) contacts are provided by C154, C157, C171, C174, C197, C200, C211, and C214. CXXCXGXG motif repeat units follow at residues 154–161 (CPDCDGAG), 171–178 (CSACDGRG), 197–204 (CPQCDGKG), and 211–218 (CSTCRGDG).

Belongs to the DnaJ family. As to quaternary structure, homodimer. Requires Zn(2+) as cofactor.

It is found in the cytoplasm. Functionally, participates actively in the response to hyperosmotic and heat shock by preventing the aggregation of stress-denatured proteins and by disaggregating proteins, also in an autonomous, DnaK-independent fashion. Unfolded proteins bind initially to DnaJ; upon interaction with the DnaJ-bound protein, DnaK hydrolyzes its bound ATP, resulting in the formation of a stable complex. GrpE releases ADP from DnaK; ATP binding to DnaK triggers the release of the substrate protein, thus completing the reaction cycle. Several rounds of ATP-dependent interactions between DnaJ, DnaK and GrpE are required for fully efficient folding. Also involved, together with DnaK and GrpE, in the DNA replication of plasmids through activation of initiation proteins. This is Chaperone protein DnaJ from Natronomonas pharaonis (strain ATCC 35678 / DSM 2160 / CIP 103997 / JCM 8858 / NBRC 14720 / NCIMB 2260 / Gabara) (Halobacterium pharaonis).